The following is a 170-amino-acid chain: Ribosome maturation factor RimP (170 aa).

The protein belongs to the RimP family.

The protein localises to the cytoplasm. Required for maturation of 30S ribosomal subunits. This Chlorobaculum parvum (strain DSM 263 / NCIMB 8327) (Chlorobium vibrioforme subsp. thiosulfatophilum) protein is Ribosome maturation factor RimP.